Here is a 238-residue protein sequence, read N- to C-terminus: NAD(P)H-quinone oxidoreductase subunit K 1 (238 aa).

[4Fe-4S] cluster contacts are provided by Cys54, Cys55, Cys119, and Cys150.

It belongs to the complex I 20 kDa subunit family. As to quaternary structure, NDH-1 can be composed of about 15 different subunits; different subcomplexes with different compositions have been identified which probably have different functions. Requires [4Fe-4S] cluster as cofactor.

Its subcellular location is the cellular thylakoid membrane. The catalysed reaction is a plastoquinone + NADH + (n+1) H(+)(in) = a plastoquinol + NAD(+) + n H(+)(out). It catalyses the reaction a plastoquinone + NADPH + (n+1) H(+)(in) = a plastoquinol + NADP(+) + n H(+)(out). Functionally, NDH-1 shuttles electrons from an unknown electron donor, via FMN and iron-sulfur (Fe-S) centers, to quinones in the respiratory and/or the photosynthetic chain. The immediate electron acceptor for the enzyme in this species is believed to be plastoquinone. Couples the redox reaction to proton translocation, and thus conserves the redox energy in a proton gradient. Cyanobacterial NDH-1 also plays a role in inorganic carbon-concentration. This is NAD(P)H-quinone oxidoreductase subunit K 1 from Cyanothece sp. (strain PCC 7425 / ATCC 29141).